Here is a 214-residue protein sequence, read N- to C-terminus: Probable transaldolase (214 aa).

Lysine 83 functions as the Schiff-base intermediate with substrate in the catalytic mechanism.

It belongs to the transaldolase family. Type 3B subfamily.

The protein resides in the cytoplasm. It carries out the reaction D-sedoheptulose 7-phosphate + D-glyceraldehyde 3-phosphate = D-erythrose 4-phosphate + beta-D-fructose 6-phosphate. It functions in the pathway carbohydrate degradation; pentose phosphate pathway; D-glyceraldehyde 3-phosphate and beta-D-fructose 6-phosphate from D-ribose 5-phosphate and D-xylulose 5-phosphate (non-oxidative stage): step 2/3. Functionally, transaldolase is important for the balance of metabolites in the pentose-phosphate pathway. In Desulfosudis oleivorans (strain DSM 6200 / JCM 39069 / Hxd3) (Desulfococcus oleovorans), this protein is Probable transaldolase.